The sequence spans 261 residues: Non-homologous end joining protein Ku 1 (261 aa).

The Ku domain maps to 12 to 171; that stretch reads SFSLVAIPVQ…LITLHYSDEV (160 aa).

Belongs to the prokaryotic Ku family. Homodimer. Interacts with LigD.

In terms of biological role, with LigD forms a non-homologous end joining (NHEJ) DNA repair enzyme, which repairs dsDNA breaks with reduced fidelity. Binds linear dsDNA with 5'- and 3'- overhangs but not closed circular dsDNA nor ssDNA. Recruits and stimulates the ligase activity of LigD. The polypeptide is Non-homologous end joining protein Ku 1 (Geotalea uraniireducens (strain Rf4) (Geobacter uraniireducens)).